The primary structure comprises 401 residues: Phosphonopyruvate decarboxylase (401 aa).

The disordered stretch occupies residues 382 to 401 (WPASAVGSGTRAAAGSAGDR). The span at 384–401 (ASAVGSGTRAAAGSAGDR) shows a compositional bias: low complexity.

It belongs to the TPP enzyme family. It depends on thiamine diphosphate as a cofactor. Mg(2+) is required as a cofactor.

It carries out the reaction 3-phosphonopyruvate + H(+) = phosphonoacetaldehyde + CO2. Its pathway is secondary metabolite biosynthesis; bialaphos biosynthesis. Its function is as follows. Involved in the biosynthesis of phosphinothricin tripeptide (PTT), also known as bialaphos (BA), a natural-product antibiotic and potent herbicide. Catalyzes the decarboxylation of phosphonopyruvate (PnPy) to generate phosphonoacetaldehyde (PnAA). In Streptomyces hygroscopicus, this protein is Phosphonopyruvate decarboxylase.